Reading from the N-terminus, the 448-residue chain is Probable intron-encoded endonuclease bI1 (448 aa).

The segment at 1-132 is cob exon 1 encoded; sequence MRLLKSHPLL…LMMATAFLGY (132 aa). The next 3 membrane-spanning stretches (helical) occupy residues 32 to 52, 86 to 106, and 112 to 132; these read FGSLLACCLIIQIVTGVTLAM, ASAFFFLVYLHIGRGMYYGSY, and LVWAIGTVILILMMATAFLGY. Residues 133-448 are cob intron 1 encoded; that stretch reads QHSPKWFDIS…QWIVEDFSDK (316 aa). A GIY-YIG domain is found at 230-321; the sequence is DLSGVYMIIN…LKLLVPNYNI (92 aa).

This sequence to endonucleases of group I introns of fungi and phage. In terms of processing, the mature protein may arise from proteolytic cleavage of an in-frame translation of cob exon 1 plus intron 1, containing the bI1 open reading frame.

It is found in the mitochondrion inner membrane. Functionally, mitochondrial DNA endonuclease involved in intron homing. This Neurospora crassa (strain ATCC 24698 / 74-OR23-1A / CBS 708.71 / DSM 1257 / FGSC 987) protein is Probable intron-encoded endonuclease bI1 (bI1).